A 90-amino-acid polypeptide reads, in one-letter code: MAKGQSLQDPFLNALRRERVPVSIYLVNGIKLQGQVESFDQFVILLKNTVSQMVYKHAISTVVPARPFNVTGHQNAQGGYGPQDDVPSGE.

One can recognise a Sm domain in the interval 9–68 (DPFLNALRRERVPVSIYLVNGIKLQGQVESFDQFVILLKNTVSQMVYKHAISTVVPARPF). The disordered stretch occupies residues 71 to 90 (TGHQNAQGGYGPQDDVPSGE).

The protein belongs to the Hfq family. Homohexamer.

RNA chaperone that binds small regulatory RNA (sRNAs) and mRNAs to facilitate mRNA translational regulation in response to envelope stress, environmental stress and changes in metabolite concentrations. Also binds with high specificity to tRNAs. The chain is RNA-binding protein Hfq from Shewanella putrefaciens (strain CN-32 / ATCC BAA-453).